The chain runs to 385 residues: Chaperone protein DnaJ (385 aa).

The 66-residue stretch at 5-70 (DYYEVLGVSK…ERKAAYDRYG (66 aa)) folds into the J domain. The CR-type zinc-finger motif lies at 143-221 (GLHKTINVPT…CNGHGRVEKD (79 aa)). Residues C156, C159, C173, C176, C195, C198, C209, and C212 each contribute to the Zn(2+) site. CXXCXGXG motif repeat units follow at residues 156–163 (CTSCEGTG), 173–180 (CPTCSGMG), 195–202 (CPTCSGLG), and 209–216 (CKTCNGHG).

It belongs to the DnaJ family. As to quaternary structure, homodimer. The cofactor is Zn(2+).

It is found in the cytoplasm. In terms of biological role, participates actively in the response to hyperosmotic and heat shock by preventing the aggregation of stress-denatured proteins and by disaggregating proteins, also in an autonomous, DnaK-independent fashion. Unfolded proteins bind initially to DnaJ; upon interaction with the DnaJ-bound protein, DnaK hydrolyzes its bound ATP, resulting in the formation of a stable complex. GrpE releases ADP from DnaK; ATP binding to DnaK triggers the release of the substrate protein, thus completing the reaction cycle. Several rounds of ATP-dependent interactions between DnaJ, DnaK and GrpE are required for fully efficient folding. Also involved, together with DnaK and GrpE, in the DNA replication of plasmids through activation of initiation proteins. The sequence is that of Chaperone protein DnaJ from Ruegeria sp. (strain TM1040) (Silicibacter sp.).